Consider the following 208-residue polypeptide: Small ribosomal subunit protein uS4 (208 aa).

In terms of domain architecture, S4 RNA-binding spans 98–158 (GRLDNVVYRM…EKSKKQARIK (61 aa)).

It belongs to the universal ribosomal protein uS4 family. Part of the 30S ribosomal subunit. Contacts protein S5. The interaction surface between S4 and S5 is involved in control of translational fidelity.

One of the primary rRNA binding proteins, it binds directly to 16S rRNA where it nucleates assembly of the body of the 30S subunit. In terms of biological role, with S5 and S12 plays an important role in translational accuracy. The polypeptide is Small ribosomal subunit protein uS4 (Haemophilus ducreyi (strain 35000HP / ATCC 700724)).